Consider the following 150-residue polypeptide: Arginine repressor (150 aa).

The protein belongs to the ArgR family.

Its subcellular location is the cytoplasm. Its pathway is amino-acid biosynthesis; L-arginine biosynthesis [regulation]. In terms of biological role, regulates arginine biosynthesis genes. This is Arginine repressor from Thermoanaerobacter sp. (strain X514).